The following is a 446-amino-acid chain: GTPase Der (446 aa).

2 EngA-type G domains span residues 3 to 167 (PVLA…AFDE) and 180 to 353 (IRLA…ASAT). GTP is bound by residues 9 to 16 (GRPNVGKS), 56 to 60 (DTGGF), 119 to 122 (NKAE), 186 to 193 (GRPNVGKS), 233 to 237 (DTAGL), and 298 to 301 (NKWD). The 85-residue stretch at 354 to 438 (KKLATPVLTR…PMRIEMKSSR (85 aa)) folds into the KH-like domain.

It belongs to the TRAFAC class TrmE-Era-EngA-EngB-Septin-like GTPase superfamily. EngA (Der) GTPase family. In terms of assembly, associates with the 50S ribosomal subunit.

GTPase that plays an essential role in the late steps of ribosome biogenesis. The sequence is that of GTPase Der from Methylibium petroleiphilum (strain ATCC BAA-1232 / LMG 22953 / PM1).